The chain runs to 91 residues: Protein LURE 1.6 (91 aa).

A signal peptide spans 1 to 20 (MKLPFIFLITLLIFVSSCTS). 3 disulfide bridges follow: Cys-59/Cys-76, Cys-62/Cys-83, and Cys-66/Cys-85.

This sequence belongs to the DEFL family. In terms of tissue distribution, expressed in the pistil. Detected in the synergid cells.

Its subcellular location is the secreted. Its function is as follows. Pollen tube attractants guiding pollen tubes to the ovular micropyle. This chain is Protein LURE 1.6, found in Arabidopsis thaliana (Mouse-ear cress).